Consider the following 1342-residue polypeptide: DNA-directed RNA polymerase subunit beta (1342 aa).

Belongs to the RNA polymerase beta chain family. The RNAP catalytic core consists of 2 alpha, 1 beta, 1 beta' and 1 omega subunit. When a sigma factor is associated with the core the holoenzyme is formed, which can initiate transcription.

The catalysed reaction is RNA(n) + a ribonucleoside 5'-triphosphate = RNA(n+1) + diphosphate. In terms of biological role, DNA-dependent RNA polymerase catalyzes the transcription of DNA into RNA using the four ribonucleoside triphosphates as substrates. This is DNA-directed RNA polymerase subunit beta from Tolumonas auensis (strain DSM 9187 / NBRC 110442 / TA 4).